A 234-amino-acid polypeptide reads, in one-letter code: Sugar fermentation stimulation protein A (234 aa).

The H-T-H motif DNA-binding region spans 201–220; that stretch reads LLSEAQQRGVEILAYKAELS.

It belongs to the SfsA family.

Binds to DNA non-specifically. Could be a regulatory factor involved in maltose metabolism. This chain is Sugar fermentation stimulation protein A, found in Escherichia coli O7:K1 (strain IAI39 / ExPEC).